An 872-amino-acid chain; its full sequence is Cellulose synthase catalytic subunit [UDP-forming] (872 aa).

The next 4 membrane-spanning stretches (helical) occupy residues 30–50 (SAFS…FIPL), 151–171 (ILGI…TQPF), 173–193 (PLAQ…VRRM), and 230–250 (LVCG…LVLG). Residues 271–364 (LWPSVDIFVP…FVSIFDCDHV (94 aa)) form a catalytic subdomain A region. The active site involves D313. Positions 360 and 362 each coordinate substrate. Positions 441 to 501 (KPLDEIGGIA…GQRIRWARGM (61 aa)) are catalytic subdomain B. D457 is a catalytic residue. 5 consecutive transmembrane segments (helical) span residues 525-545 (VNAM…TAPL), 547-567 (FLLL…LFVL), 592-612 (IYET…LINP), 640-660 (IFLV…YFYG), and 668-688 (VVVS…AVAV). In terms of domain architecture, PilZ spans 694 to 790 (QVRRSHRVEM…QHIDFVQCTF (97 aa)). Residues 833–853 (SVKGIFRVLTSLVSWVVSFIP) form a helical membrane-spanning segment.

The protein belongs to the glycosyltransferase 2 family. Mg(2+) serves as cofactor.

Its subcellular location is the cell inner membrane. It catalyses the reaction [(1-&gt;4)-beta-D-glucosyl](n) + UDP-alpha-D-glucose = [(1-&gt;4)-beta-D-glucosyl](n+1) + UDP + H(+). Its pathway is glycan metabolism; bacterial cellulose biosynthesis. With respect to regulation, activated by bis-(3'-5') cyclic diguanylic acid (c-di-GMP). Its function is as follows. Catalytic subunit of cellulose synthase. It polymerizes uridine 5'-diphosphate glucose to cellulose, which is produced as an extracellular component for mechanical and chemical protection at the onset of the stationary phase, when the cells exhibit multicellular behavior (rdar morphotype). Coexpression of cellulose and thin aggregative fimbriae leads to a hydrophobic network with tightly packed cells embedded in a highly inert matrix. The protein is Cellulose synthase catalytic subunit [UDP-forming] (bcsA) of Escherichia coli O157:H7.